The chain runs to 274 residues: Phloretin hydrolase (274 aa).

4 residues coordinate Zn(2+): His123, Glu154, His251, and Glu255.

This sequence belongs to the DAPG/phloretin hydrolase family. In terms of assembly, homodimer. Zn(2+) serves as cofactor.

Its subcellular location is the cytoplasm. It catalyses the reaction phloretin + H2O = phloretate + 1,3,5-trihydroxybenzene + H(+). Catalyzes the hydrolytic C-C cleavage of phloretin to phloroglucinol and 3-(4-hydroxyphenyl)propionic acid during flavonoid degradation. Also hydrolyzes other C-acylated phenols. The sequence is that of Phloretin hydrolase (phy) from Eubacterium ramulus.